The following is a 537-amino-acid chain: Actin-histidine N-methyltransferase (537 aa).

The span at 1-12 (MGKNTKRNKKTK) shows a compositional bias: basic residues. The interval 1–50 (MGKNTKRNKKTKQQQQQPQQNGVTASASGTAVEDFEDQQAASSLPSLNGK) is disordered. Residues R114, 143–145 (YQL), R299, 325–329 (DMANH), and 375–377 (NGF) each bind S-adenosyl-L-methionine. One can recognise an SET domain in the interval 133–364 (EGLEIAIFPG…TGEQFFIYYG (232 aa)).

This sequence belongs to the class V-like SAM-binding methyltransferase superfamily. SETD3 actin-histidine methyltransferase family.

The protein resides in the cytoplasm. Its subcellular location is the nucleus. The enzyme catalyses L-histidyl-[protein] + S-adenosyl-L-methionine = N(tele)-methyl-L-histidyl-[protein] + S-adenosyl-L-homocysteine + H(+). Functionally, protein-histidine N-methyltransferase that specifically mediates 3-methylhistidine (tele-methylhistidine) methylation of actin at 'His-74'. The chain is Actin-histidine N-methyltransferase from Drosophila melanogaster (Fruit fly).